The chain runs to 471 residues: Probable anion transporter 5, chloroplastic (471 aa).

The transit peptide at 1 to 59 (MAASASASALQAERCLLVGVGAGPRRHRLPLRMPPPLHAPPALLLLPHRRRRRWPPAVR) directs the protein to the chloroplast. Positions 56-76 (PAVRASPGEGGGGGGGGGGGG) are disordered. 4 helical membrane-spanning segments follow: residues 62-82 (PGEG…AGAL), 103-123 (IGVV…GFMP), 162-182 (VVFG…PPII), and 185-205 (LGWE…CLGF). Positions 63 to 76 (GEGGGGGGGGGGGG) are enriched in gly residues. The tract at residues 226-247 (GQSPSGSSDLISSSVSPKSSES) is disordered. Low complexity predominate over residues 228–247 (SPSGSSDLISSSVSPKSSES). Helical transmembrane passes span 270–290 (VWAM…CLSW), 307–327 (AWVS…AAPF), 348–368 (IAFL…GVPP), 371–391 (IVAF…GLYC), 403–423 (ILLG…VALT), and 435–455 (ISLF…WLAF).

The protein belongs to the major facilitator superfamily. Sodium/anion cotransporter (TC 2.A.1.14) family.

It is found in the plastid. Its subcellular location is the chloroplast membrane. Its function is as follows. Probable anion transporter. This is Probable anion transporter 5, chloroplastic (PHT4;5) from Oryza sativa subsp. japonica (Rice).